The primary structure comprises 379 residues: Stimulator of interferon genes protein (379 aa).

Residues 1–23 (MPQDPSTRSSPARLLIPEPRAGR) lie on the Cytoplasmic side of the membrane. The helical transmembrane segment at 24–40 (ARHAACVLLAVCFVVLF) threads the bilayer. At 41-50 (LSGEPLAPII) the chain is on the lumenal side. A helical transmembrane segment spans residues 51–75 (RSVCTQLAALQLGVLLKGCCCLAEE). Topologically, residues 76–97 (IFHLHSRHHGSLWQVLCSCFPP) are cytoplasmic. A helical transmembrane segment spans residues 98–111 (RWYLALLLVGGSAY). Residues 112–121 (LDPPEDNGHS) lie on the Lumenal side of the membrane. The helical transmembrane segment at 122–139 (PRLALTLSCLCQLLVLAL) threads the bilayer. Residues 140 to 379 (GLQKLSAVEV…LPQPLRSDCP (240 aa)) are Cytoplasmic-facing. A cyclic dinucleotide-binding domain (CBD) region spans residues 158–345 (KNVAHGLAWS…WHLQQQQREE (188 aa)). 3',3'-c-di-GMP is bound by residues Ser167, Tyr172, 243-246 (RVYK), and Ser268. 2',3'-cGAMP contacts are provided by residues 167–172 (SYYIGY), 243–246 (RVYK), and Ser268. A pLxIS motif motif is present at residues 363 to 366 (LQVS). Ser366 is modified (phosphoserine; by TBK1).

It belongs to the STING family. As to quaternary structure, homodimer; forms a homodimer in absence of cyclic nucleotide (c-di-GMP or cGAMP). Homotetramer; in presence of cyclic nucleotide (c-di-GMP or cGAMP), forms tetramers and higher-order oligomers through side-by-side packing. Interacts (when phosphorylated) with IRF3; following activation and phosphorylation on the pLxIS motif by TBK1, recruits IRF3. Post-translationally, phosphorylation by TBK1 leads to activation and production of IFN-beta. Following cyclic nucleotide (c-di-GMP or cGAMP)-binding, activation and translocation from the endoplasmic reticulum, STING1 is phosphorylated by TBK1 at Ser-366 in the pLxIS motif. The phosphorylated pLxIS motif constitutes an IRF3-binding motif, leading to recruitment of the transcription factor IRF3 to induce type-I interferons and other cytokines.

It localises to the endoplasmic reticulum membrane. The protein resides in the cytoplasm. It is found in the perinuclear region. Its subcellular location is the endoplasmic reticulum-Golgi intermediate compartment membrane. The protein localises to the golgi apparatus membrane. It localises to the cytoplasmic vesicle. The protein resides in the autophagosome membrane. It carries out the reaction H(+)(in) = H(+)(out). Functionally, facilitator of innate immune signaling that acts as a sensor of cytosolic DNA from bacteria and viruses and promotes the production of type I interferon (IFN-alpha and IFN-beta). Innate immune response is triggered in response to non-CpG double-stranded DNA from viruses and bacteria delivered to the cytoplasm. Acts by binding cyclic dinucleotides: recognizes and binds cyclic di-GMP (c-di-GMP), a second messenger produced by bacteria, and cyclic GMP-AMP (cGAMP), a messenger produced by CGAS in response to DNA virus in the cytosol. Upon binding of c-di-GMP or cGAMP, STING1 oligomerizes and is able to activate both NF-kappa-B and IRF3 transcription pathways to induce expression of type I interferon and exert a potent anti-viral state. Exhibits 2',3' phosphodiester linkage-specific ligand recognition: can bind both 2'-3' linked cGAMP and 3'-3' linked cGAMP but is preferentially activated by 2'-3' linked cGAMP. In addition to promote the production of type I interferons, plays a direct role in autophagy. Following cGAMP-binding, STING1 buds from the endoplasmic reticulum into COPII vesicles, which then form the endoplasmic reticulum-Golgi intermediate compartment (ERGIC). The ERGIC serves as the membrane source for LC3 lipidation, leading to formation of autophagosomes that target cytosolic DNA or DNA viruses for degradation by the lysosome. Promotes autophagy by acting as a proton channel that directs proton efflux from the Golgi to facilitate LC3 lipidation. The autophagy- and interferon-inducing activities can be uncoupled and autophagy induction is independent of TBK1 phosphorylation. This is Stimulator of interferon genes protein from Gallus gallus (Chicken).